The sequence spans 497 residues: Thiamine transporter 1 (497 aa).

At methionine 1 the chain carries N-acetylmethionine. Over methionine 1–glutamate 28 the chain is Cytoplasmic. Residues cysteine 29–leucine 46 form a helical membrane-spanning segment. Topologically, residues arginine 47 to glutamate 72 are extracellular. Residue asparagine 63 is glycosylated (N-linked (GlcNAc...) asparagine). A helical transmembrane segment spans residues isoleucine 73 to alanine 91. Residues threonine 92–proline 99 are Cytoplasmic-facing. The chain crosses the membrane as a helical span at residues valine 100 to alanine 118. The Extracellular portion of the chain corresponds to glutamine 119–glutamate 128. Residues phenylalanine 129 to valine 149 traverse the membrane as a helical segment. Topologically, residues aspartate 150–threonine 165 are cytoplasmic. Residues leucine 166–tryptophan 185 form a helical membrane-spanning segment. The Extracellular portion of the chain corresponds to serine 186–asparagine 191. A helical membrane pass occupies residues valine 192–leucine 208. At proline 209–aspartate 285 the chain is on the cytoplasmic side. Serine 222 bears the Phosphoserine mark. A helical transmembrane segment spans residues phenylalanine 286 to phenylalanine 310. Residues glutamine 311 to glutamate 337 lie on the Extracellular side of the membrane. Asparagine 314 is a glycosylation site (N-linked (GlcNAc...) asparagine). Residues alanine 338–isoleucine 354 traverse the membrane as a helical segment. Over lysine 355–glutamate 363 the chain is Cytoplasmic. A helical transmembrane segment spans residues methionine 364–methionine 380. Over aspartate 381 to isoleucine 386 the chain is Extracellular. A helical membrane pass occupies residues tryptophan 387–phenylalanine 409. At glutamine 410–arginine 419 the chain is on the cytoplasmic side. Residues tyrosine 420 to valine 443 form a helical membrane-spanning segment. Residues aspartate 444–glutamine 455 are Extracellular-facing. The helical transmembrane segment at phenylalanine 456 to methionine 479 threads the bilayer. The Cytoplasmic portion of the chain corresponds to lysine 480–serine 497.

It belongs to the reduced folate carrier (RFC) transporter (TC 2.A.48) family. In terms of assembly, interacts with TSPAN1; this interaction increases the stability of SLC19A2. Interacts with TMEM63B. Ubiquitous; most abundant in skeletal and cardiac muscle. Medium expression in placenta, heart, liver and kidney, low in lung.

It localises to the cell membrane. The catalysed reaction is thiamine(out) + H(+)(in) = thiamine(in) + H(+)(out). The enzyme catalyses pyridoxine(out) + n H(+)(out) = pyridoxine(in) + n H(+)(in). Pyridoxine transport is inhibited by carbonyl cyanide p-trifluoromethoxyphenylhydrazone (FCCP) and carbonyl cyanide m-chlorophenylhydrazone (CCCP). Functionally, high-affinity transporter for the intake of thiamine. Mediates H(+)-dependent pyridoxine transport. The protein is Thiamine transporter 1 (SLC19A2) of Homo sapiens (Human).